The chain runs to 890 residues: Protein translocase subunit SecA (890 aa).

Residues Gln-86, 104-108, and Asp-493 each bind ATP; that span reads GEGKT. Basic and acidic residues predominate over residues 851-872; sequence EASHGDGDAKKAPVVKKEESGR. A disordered region spans residues 851–873; the sequence is EASHGDGDAKKAPVVKKEESGRN. Cys-876, Cys-878, Cys-887, and Cys-888 together coordinate Zn(2+).

Belongs to the SecA family. Monomer and homodimer. Part of the essential Sec protein translocation apparatus which comprises SecA, SecYEG and auxiliary proteins SecDF. Other proteins may also be involved. Zn(2+) is required as a cofactor.

It localises to the cell membrane. The protein localises to the cytoplasm. It carries out the reaction ATP + H2O + cellular proteinSide 1 = ADP + phosphate + cellular proteinSide 2.. Functionally, part of the Sec protein translocase complex. Interacts with the SecYEG preprotein conducting channel. Has a central role in coupling the hydrolysis of ATP to the transfer of proteins into and across the cell membrane, serving as an ATP-driven molecular motor driving the stepwise translocation of polypeptide chains across the membrane. The polypeptide is Protein translocase subunit SecA (Alkaliphilus oremlandii (strain OhILAs) (Clostridium oremlandii (strain OhILAs))).